A 359-amino-acid polypeptide reads, in one-letter code: 5-formaminoimidazole-4-carboxamide-1-(beta)-D-ribofuranosyl 5'-monophosphate synthetase (359 aa).

5-amino-1-(5-phospho-beta-D-ribosyl)imidazole-4-carboxamide-binding residues include His-28 and Ser-95. An ATP-grasp domain is found at 115–346 (ELMIWETDRD…MGRRIAREIK (232 aa)). Residues 144–206 (PEEI…ANIY) and Glu-228 contribute to the ATP site. Asn-256 contacts 5-amino-1-(5-phospho-beta-D-ribosyl)imidazole-4-carboxamide. Mg(2+) contacts are provided by Glu-295 and Glu-308.

Belongs to the phosphohexose mutase family. The cofactor is Mg(2+). Mn(2+) is required as a cofactor.

It carries out the reaction 5-amino-1-(5-phospho-beta-D-ribosyl)imidazole-4-carboxamide + formate + ATP = 5-formamido-1-(5-phospho-D-ribosyl)imidazole-4-carboxamide + ADP + phosphate. The protein operates within purine metabolism; IMP biosynthesis via de novo pathway; 5-formamido-1-(5-phospho-D-ribosyl)imidazole-4-carboxamide from 5-amino-1-(5-phospho-D-ribosyl)imidazole-4-carboxamide (formate route): step 1/1. Catalyzes the ATP- and formate-dependent formylation of 5-aminoimidazole-4-carboxamide-1-beta-d-ribofuranosyl 5'-monophosphate (AICAR) to 5-formaminoimidazole-4-carboxamide-1-beta-d-ribofuranosyl 5'-monophosphate (FAICAR) in the absence of folates. In Archaeoglobus fulgidus (strain ATCC 49558 / DSM 4304 / JCM 9628 / NBRC 100126 / VC-16), this protein is 5-formaminoimidazole-4-carboxamide-1-(beta)-D-ribofuranosyl 5'-monophosphate synthetase.